Here is a 115-residue protein sequence, read N- to C-terminus: Photosystem II reaction center Psb28 protein (115 aa).

The protein belongs to the Psb28 family. Part of the photosystem II complex.

The protein resides in the plastid. It localises to the chloroplast thylakoid membrane. The chain is Photosystem II reaction center Psb28 protein from Cyanidium caldarium (Red alga).